The following is a 350-amino-acid chain: Protein disulfide isomerase Creld2 (350 aa).

The first 22 residues, 1 to 22 (MHLLLAAAFGLLLLLPPPGAVA), serve as a signal peptide directing secretion. The short motif at 29–32 (CQRC) is the CXXC element. Cystine bridges form between Cys-29–Cys-32, Cys-138–Cys-152, Cys-146–Cys-164, and Cys-166–Cys-175. Residues 134-176 (DCQECQGGSERPCSGNGYCSGDGSRQGDGSCQCHTGYKGPLCI) form the EGF-like 1 domain. Residues 191–238 (HSICSACDESCKTCSGPSNKDCIQCEVGWARVEDACVDVDECAAETSP) form an FU 1 repeat. N-linked (GlcNAc...) asparagine glycosylation is present at Asn-249. Residues 251–298 (SYTCEDCDSTCVGCTGKGPANCKECIAGYTKESGQCTDIDECSLEEKA) form an FU 2 repeat. The CXXC motif lies at 261 to 264 (CVGC). Disulfide bonds link Cys-261–Cys-264, Cys-292–Cys-306, Cys-299–Cys-315, and Cys-317–Cys-328. Residues 288 to 329 (DIDECSLEEKACKRKNENCYNVPGSFVCVCPEGFEETEDACV) enclose the EGF-like 2; calcium-binding domain.

It belongs to the CRELD family. In terms of assembly, interacts with CHRNA4. Component of a complex containing at least CRELD2, MANF, MATN3 and PDIA4. In terms of tissue distribution, expressed in chondrocytes (at protein level).

It localises to the endoplasmic reticulum. It carries out the reaction Catalyzes the rearrangement of -S-S- bonds in proteins.. Protein disulfide isomerase. Might play a role in the unfolded protein response. May regulate transport of alpha4-beta2 neuronal acetylcholine receptor. The chain is Protein disulfide isomerase Creld2 (Creld2) from Mus musculus (Mouse).